The sequence spans 256 residues: MLEKFSKWKGNRSNHTTPSHSLDESAIPKHVAIIMDGNGRWAKKKGLPRIAGHREGMKVINKIVRKAIDLKIEVLSLYAFSTENWKRPRTEVDYLLKLPERFLKLELPNLMEENVQVRIMGGLDTLPEHTAKAVTKAMEETKDNTGLILNFALNYGSRYEMVEAMKQVAKEVETGTLSSDAITEDVISRHLMTADLRDPDLLIRTSGEIRLSNFMLWQLAYSEFWFTDVLWPDFTEHHLTEAIAVYQKRARRYGGV.

A disordered region spans residues 1–22; the sequence is MLEKFSKWKGNRSNHTTPSHSL. Asp-36 is an active-site residue. Asp-36 contacts Mg(2+). Substrate is bound by residues 37–40, Trp-41, Arg-49, His-53, and 81–83; these read GNGR and STE. The active-site Proton acceptor is the Asn-84. Substrate contacts are provided by residues Trp-85, Arg-87, Arg-204, and 210-212; that span reads RLS. Residue Glu-223 coordinates Mg(2+).

It belongs to the UPP synthase family. Homodimer. It depends on Mg(2+) as a cofactor.

Catalyzes the condensation of isopentenyl diphosphate (IPP) with allylic pyrophosphates generating different type of terpenoids. The sequence is that of Isoprenyl transferase from Halalkalibacterium halodurans (strain ATCC BAA-125 / DSM 18197 / FERM 7344 / JCM 9153 / C-125) (Bacillus halodurans).